A 97-amino-acid polypeptide reads, in one-letter code: UPF0729 protein GD16342 (97 aa).

The disordered stretch occupies residues 64–97; it reads KPEKASVGPAEESQNPPLNAIAAETEVDESKKEI. At Ser69 the chain carries Phosphoserine.

It belongs to the UPF0729 family.

In Drosophila simulans (Fruit fly), this protein is UPF0729 protein GD16342.